The following is a 721-amino-acid chain: Exocyst complex component 3-like protein 4 (721 aa).

Disordered stretches follow at residues 1 to 52 and 94 to 135; these read MPLP…SLGM and GLTA…QAES. A compositionally biased stretch (polar residues) spans 22–37; the sequence is SQTLPVTTWKSNSMKE. Serine 515 is modified (phosphoserine).

This sequence belongs to the SEC6 family.

This chain is Exocyst complex component 3-like protein 4 (Exoc3l4), found in Mus musculus (Mouse).